The primary structure comprises 951 residues: Valine--tRNA ligase (951 aa).

Residues 42-52 (PNVTGSLHMGH) carry the 'HIGH' region motif. The 'KMSKS' region signature appears at 554 to 558 (KMSKS). Position 557 (Lys-557) interacts with ATP. Positions 880 to 944 (AGLINKEDEL…AEAKAKLIEQ (65 aa)) form a coiled coil.

It belongs to the class-I aminoacyl-tRNA synthetase family. ValS type 1 subfamily. Monomer.

It localises to the cytoplasm. It catalyses the reaction tRNA(Val) + L-valine + ATP = L-valyl-tRNA(Val) + AMP + diphosphate. In terms of biological role, catalyzes the attachment of valine to tRNA(Val). As ValRS can inadvertently accommodate and process structurally similar amino acids such as threonine, to avoid such errors, it has a 'posttransfer' editing activity that hydrolyzes mischarged Thr-tRNA(Val) in a tRNA-dependent manner. In Escherichia coli (strain K12), this protein is Valine--tRNA ligase (valS).